We begin with the raw amino-acid sequence, 60 residues long: Mastoparan-D (60 aa).

An N-terminal signal peptide occupies residues 1–27 (MKNTILILFTAFIALLGFFGMSAEALA). 4 AXPX repeats span residues 27–30 (ADPI), 31–34 (ADPV), 35–38 (AGPN), and 41–44 (ADPE). Positions 28 to 45 (DPIADPVAGPNPEADPEA) are excised as a propeptide. A Leucine amide modification is found at Leu59.

This sequence belongs to the MCD family. Mastoparan subfamily. In terms of tissue distribution, expressed by the venom gland.

The protein resides in the secreted. The protein localises to the target cell membrane. In terms of biological role, antimicrobial and mast cell degranulating peptide. Has broad spectrum antibacterial activity against both Gram-positive and Gram-negative bacteria (S.aureus MIC=24-32 ug/ml, S.xylosus MIC=2 ug/ml, S.alactolyticus MIC=16 ug/ml, C.koseri MIC=4 ug/ml, E.coli MIC=8 ug/ml, K.pneumoniae MIC=32 ug/ml, P.aerugiosa MIC=128 ug/ml, S.choleraesuis MIC=16 ug/ml, S.typhimurium MIC=32 ug/ml, V.parahamelytics MIC=32 ug/ml). Affects membrane permeability of E.coli. Shows hemolytic activities on sheep, chicken and human erythrocytes. Its mast cell degranulation activity may be related to the activation of G-protein coupled receptors in mast cells as well as interaction with other proteins located in cell endosomal membranes in the mast cells. This Vespa ducalis (Black-tailed hornet) protein is Mastoparan-D.